The following is a 193-amino-acid chain: Superoxide dismutase [Fe] (193 aa).

Fe cation-binding residues include His-27, His-75, Asp-159, and His-163.

This sequence belongs to the iron/manganese superoxide dismutase family. Homodimer. Requires Fe cation as cofactor.

It carries out the reaction 2 superoxide + 2 H(+) = H2O2 + O2. Functionally, destroys superoxide anion radicals which are normally produced within the cells and which are toxic to biological systems. This chain is Superoxide dismutase [Fe] (sodB), found in Bacteroides fragilis (strain YCH46).